The sequence spans 266 residues: Apolipoprotein A-I (266 aa).

The signal sequence occupies residues 1–18; it reads MKAVVLTLAVLFLTGSQA. Tandem repeats lie at residues 67 to 88 and 89 to 110. The interval 67-266 is 10 X approximate tandem repeats; the sequence is LKLLDNWDSL…DEAAKKLNTQ (200 aa). Residue Met-109 is modified to Methionine sulfoxide. The stretch at 111 to 121 is one 3; half-length repeat; it reads KDLEEVKQKVQ. A run of 5 repeats spans residues 122-143, 144-165, 166-187, 188-209, and 210-231. A 9; half-length repeat occupies 232–242; the sequence is PALEDLRQGLL. Copy 10 of the repeat occupies 243 to 266; sequence PVLESFKVSLLAAVDEAAKKLNTQ.

Belongs to the apolipoprotein A1/A4/E family. Homodimer. Interacts with APOA1BP and CLU. Component of a sperm activating protein complex (SPAP), consisting of APOA1, an immunoglobulin heavy chain, an immunoglobulin light chain and albumin. Interacts with NDRG1. Interacts with SCGB3A2. Interacts with NAXE and YJEFN3. In terms of processing, glycosylated. Post-translationally, palmitoylated. Phosphorylation sites are present in the extracellular medium.

The protein localises to the secreted. In terms of biological role, participates in the reverse transport of cholesterol from tissues to the liver for excretion by promoting cholesterol efflux from tissues and by acting as a cofactor for the lecithin cholesterol acyltransferase (LCAT). As part of the SPAP complex, activates spermatozoa motility. The sequence is that of Apolipoprotein A-I (APOA1) from Mustela putorius furo (European domestic ferret).